A 227-amino-acid chain; its full sequence is Zeamatin (227 aa).

The first 20 residues, 1–20, serve as a signal peptide directing secretion; sequence MAGSVAIVGIFVALLAVAGE. 8 disulfide bridges follow: C30–C226, C72–C82, C87–C93, C139–C215, C145–C198, C153–C163, C167–C176, and C177–C185.

The protein belongs to the thaumatin family.

Functionally, has antifungal activity. Inhibits Candida albicans and Trichoderma reesei; marginal inhibition observed against Alternaria solani and Neurospora crassa. This is Zeamatin (Zlp) from Zea mays (Maize).